A 137-amino-acid polypeptide reads, in one-letter code: Large ribosomal subunit protein uL16 (137 aa).

It belongs to the universal ribosomal protein uL16 family. In terms of assembly, part of the 50S ribosomal subunit.

In terms of biological role, binds 23S rRNA and is also seen to make contacts with the A and possibly P site tRNAs. The sequence is that of Large ribosomal subunit protein uL16 from Methylocella silvestris (strain DSM 15510 / CIP 108128 / LMG 27833 / NCIMB 13906 / BL2).